The sequence spans 41 residues: Trypsin inhibitor (41 aa).

Disulfide bonds link Cys15-Cys26, Cys17-Cys24, and Cys29-Cys37.

Functionally, has two active sites that simultaneously bind and inhibit trypsin. The protein is Trypsin inhibitor of Trichosanthes kirilowii (Chinese snake gourd).